The following is a 269-amino-acid chain: Type III pantothenate kinase (269 aa).

9–16 (DVGNTSVK) contacts ATP. Substrate-binding positions include Tyr106 and 113-116 (GADR). Asp115 functions as the Proton acceptor in the catalytic mechanism. K(+) is bound at residue Asp137. Thr140 lines the ATP pocket. Residue Thr193 participates in substrate binding.

It belongs to the type III pantothenate kinase family. As to quaternary structure, homodimer. NH4(+) serves as cofactor. Requires K(+) as cofactor.

The protein resides in the cytoplasm. It carries out the reaction (R)-pantothenate + ATP = (R)-4'-phosphopantothenate + ADP + H(+). Its pathway is cofactor biosynthesis; coenzyme A biosynthesis; CoA from (R)-pantothenate: step 1/5. Functionally, catalyzes the phosphorylation of pantothenate (Pan), the first step in CoA biosynthesis. The sequence is that of Type III pantothenate kinase from Lawsonia intracellularis (strain PHE/MN1-00).